Reading from the N-terminus, the 237-residue chain is Phosphoadenosine 5'-phosphosulfate reductase (237 aa).

Cysteine 231 (nucleophile; cysteine thiosulfonate intermediate) is an active-site residue.

The protein belongs to the PAPS reductase family. CysH subfamily.

The protein localises to the cytoplasm. The catalysed reaction is [thioredoxin]-disulfide + sulfite + adenosine 3',5'-bisphosphate + 2 H(+) = [thioredoxin]-dithiol + 3'-phosphoadenylyl sulfate. Its pathway is sulfur metabolism; hydrogen sulfide biosynthesis; sulfite from sulfate: step 3/3. Catalyzes the formation of sulfite from phosphoadenosine 5'-phosphosulfate (PAPS) using thioredoxin as an electron donor. The protein is Phosphoadenosine 5'-phosphosulfate reductase of Xylella fastidiosa (strain M23).